The primary structure comprises 342 residues: Ketol-acid reductoisomerase (NADP(+)) (342 aa).

Positions 2 to 182 (AKIYYDDDAD…GGLRAGGIET (181 aa)) constitute a KARI N-terminal Rossmann domain. Residues 25 to 28 (YGSQ), R48, S51, S53, and 83 to 86 (DQNQ) contribute to the NADP(+) site. The active site involves H108. NADP(+) is bound at residue G134. The KARI C-terminal knotted domain maps to 183-328 (SFREETETDL…KELRKMYSWL (146 aa)). Mg(2+)-binding residues include D191, E195, E227, and E231. Residue S252 coordinates substrate.

This sequence belongs to the ketol-acid reductoisomerase family. Mg(2+) is required as a cofactor.

It carries out the reaction (2R)-2,3-dihydroxy-3-methylbutanoate + NADP(+) = (2S)-2-acetolactate + NADPH + H(+). The catalysed reaction is (2R,3R)-2,3-dihydroxy-3-methylpentanoate + NADP(+) = (S)-2-ethyl-2-hydroxy-3-oxobutanoate + NADPH + H(+). It participates in amino-acid biosynthesis; L-isoleucine biosynthesis; L-isoleucine from 2-oxobutanoate: step 2/4. It functions in the pathway amino-acid biosynthesis; L-valine biosynthesis; L-valine from pyruvate: step 2/4. Functionally, involved in the biosynthesis of branched-chain amino acids (BCAA). Catalyzes an alkyl-migration followed by a ketol-acid reduction of (S)-2-acetolactate (S2AL) to yield (R)-2,3-dihydroxy-isovalerate. In the isomerase reaction, S2AL is rearranged via a Mg-dependent methyl migration to produce 3-hydroxy-3-methyl-2-ketobutyrate (HMKB). In the reductase reaction, this 2-ketoacid undergoes a metal-dependent reduction by NADPH to yield (R)-2,3-dihydroxy-isovalerate. The protein is Ketol-acid reductoisomerase (NADP(+)) of Cutibacterium acnes (strain DSM 16379 / KPA171202) (Propionibacterium acnes).